A 600-amino-acid chain; its full sequence is NADH-quinone oxidoreductase subunit C/D (600 aa).

Positions 1–190 (MIDLMPKKNT…EPFFLNEQKE (190 aa)) are NADH dehydrogenase I subunit C. The segment at 214–600 (EFMFLNLGPN…IDFVMSDVDR (387 aa)) is NADH dehydrogenase I subunit D.

The protein in the N-terminal section; belongs to the complex I 30 kDa subunit family. This sequence in the C-terminal section; belongs to the complex I 49 kDa subunit family. NDH-1 is composed of 13 different subunits. Subunits NuoB, CD, E, F, and G constitute the peripheral sector of the complex.

It localises to the cell membrane. It carries out the reaction a quinone + NADH + 5 H(+)(in) = a quinol + NAD(+) + 4 H(+)(out). Its function is as follows. NDH-1 shuttles electrons from NADH, via FMN and iron-sulfur (Fe-S) centers, to quinones in the respiratory chain. The immediate electron acceptor for the enzyme in this species is believed to be ubiquinone. Couples the redox reaction to proton translocation (for every two electrons transferred, four hydrogen ions are translocated across the cytoplasmic membrane), and thus conserves the redox energy in a proton gradient. This is NADH-quinone oxidoreductase subunit C/D from Buchnera aphidicola subsp. Acyrthosiphon pisum (strain 5A).